Here is a 48-residue protein sequence, read N- to C-terminus: Toxin CSTX-14 (48 aa).

4 cysteine pairs are disulfide-bonded: cysteine 3-cysteine 18, cysteine 10-cysteine 27, cysteine 17-cysteine 42, and cysteine 29-cysteine 40.

The protein belongs to the neurotoxin 19 (CSTX) family. 12 subfamily. Heterodimer of A and B chains; disulfide-linked. In terms of processing, contains 4 disulfide bonds. Expressed by the venom gland.

It localises to the secreted. This Cupiennius salei (American wandering spider) protein is Toxin CSTX-14.